Consider the following 145-residue polypeptide: Actin-related protein 4A (145 aa).

The segment at 47–66 is disordered; sequence IDDAANTTEDAKESDKEKGK. Positions 55–64 are enriched in basic and acidic residues; sequence EDAKESDKEK.

The protein belongs to the actin family. ARP4 subfamily. As to expression, expressed in roots, leaves and flowers.

This chain is Actin-related protein 4A (ARP4A), found in Arabidopsis thaliana (Mouse-ear cress).